The primary structure comprises 83 residues: UPF0248 protein TGAM_1209 (83 aa).

This sequence belongs to the UPF0248 family.

In Thermococcus gammatolerans (strain DSM 15229 / JCM 11827 / EJ3), this protein is UPF0248 protein TGAM_1209.